Reading from the N-terminus, the 136-residue chain is DNA-directed RNA polymerase subunit omega (136 aa).

Belongs to the RNA polymerase subunit omega family. The RNAP catalytic core consists of 2 alpha, 1 beta, 1 beta' and 1 omega subunit. When a sigma factor is associated with the core the holoenzyme is formed, which can initiate transcription.

It catalyses the reaction RNA(n) + a ribonucleoside 5'-triphosphate = RNA(n+1) + diphosphate. Its function is as follows. Promotes RNA polymerase assembly. Latches the N- and C-terminal regions of the beta' subunit thereby facilitating its interaction with the beta and alpha subunits. In Methylorubrum extorquens (strain CM4 / NCIMB 13688) (Methylobacterium extorquens), this protein is DNA-directed RNA polymerase subunit omega.